The following is a 264-amino-acid chain: tRNA (guanine-N(1)-)-methyltransferase (264 aa).

Residues G125 and 145–150 (LGDFVL) contribute to the S-adenosyl-L-methionine site.

The protein belongs to the RNA methyltransferase TrmD family. In terms of assembly, homodimer.

It localises to the cytoplasm. It carries out the reaction guanosine(37) in tRNA + S-adenosyl-L-methionine = N(1)-methylguanosine(37) in tRNA + S-adenosyl-L-homocysteine + H(+). Functionally, specifically methylates guanosine-37 in various tRNAs. This chain is tRNA (guanine-N(1)-)-methyltransferase, found in Burkholderia cenocepacia (strain HI2424).